Reading from the N-terminus, the 375-residue chain is Alanine racemase (375 aa).

The active-site Proton acceptor; specific for D-alanine is the Lys40. Lys40 bears the N6-(pyridoxal phosphate)lysine mark. Arg140 provides a ligand contact to substrate. The Proton acceptor; specific for L-alanine role is filled by Tyr268. Met315 serves as a coordination point for substrate.

Belongs to the alanine racemase family. It depends on pyridoxal 5'-phosphate as a cofactor.

The catalysed reaction is L-alanine = D-alanine. It participates in amino-acid biosynthesis; D-alanine biosynthesis; D-alanine from L-alanine: step 1/1. Catalyzes the interconversion of L-alanine and D-alanine. May also act on other amino acids. The sequence is that of Alanine racemase (alr) from Limosilactobacillus reuteri (strain DSM 20016) (Lactobacillus reuteri).